We begin with the raw amino-acid sequence, 180 residues long: Beta-lactoglobulin-1 (180 aa).

The signal sequence occupies residues 1-18 (MKCLLLALGLALMCGIQA). 2 disulfides stabilise this stretch: C84/C178 and C124/C137.

It belongs to the calycin superfamily. Lipocalin family. In terms of assembly, monomer.

Its subcellular location is the secreted. Lactoglobulin is the primary component of whey, it binds retinol and is probably involved in the transport of that molecule. The chain is Beta-lactoglobulin-1 (LGB1) from Equus caballus (Horse).